Reading from the N-terminus, the 529-residue chain is Intraflagellar transport protein 56 (529 aa).

Positions 1-21 (MLHNRMTTAFERSKEQEHEAA) are disordered. A compositionally biased stretch (basic and acidic residues) spans 11–21 (ERSKEQEHEAA). TPR repeat units follow at residues 57 to 90 (GNADLWIAYCNFHLGRHEEALEIYTALKKSKNPP), 154 to 187 (SADQMALAAVHFLRTHYQQALECYEEVLQVQPEC), 189 to 221 (AIYMHMALCYYKLGDYLKSEEFLMLYRENAEDS), 285 to 321 (SEARQNLVKLYIEKGQYEDAYKVVQSFEPAVSAEYTL), 359 to 392 (VLGRRAMAAAYFLTGEFEEASMYLESIADIPKES), and 428 to 461 (PVHRTWLGRLLIRAQRSAEAFDLYRDAEKNSLQT).

Belongs to the IFT56 family.

Its subcellular location is the cell projection. It localises to the cilium. The protein resides in the flagellum. It is found in the cytoplasm. The protein localises to the cytoskeleton. Its subcellular location is the flagellum axoneme. It localises to the flagellum basal body. Component of the intraflagellar transport complex B (IFT-B) involved in flagellar assembly. This Giardia intestinalis (strain ATCC 50803 / WB clone C6) (Giardia lamblia) protein is Intraflagellar transport protein 56.